The chain runs to 473 residues: Chromosomal replication initiator protein DnaA (473 aa).

Residues 1 to 73 form a domain I, interacts with DnaA modulators region; the sequence is MTNIEQDRWS…LSCWQAEMPQ (73 aa). A domain II region spans residues 73–129; that stretch reads QVHRVDLTVRTAMRCAAPAKDAPAHAEPRRDDGRPAPELRATAIAPVSATHEALGGS. The domain III, AAA+ region stretch occupies residues 130–352; the sequence is PLDPRLTFGS…GAINRLLAHS (223 aa). Positions 177, 179, 180, and 181 each coordinate ATP. A domain IV, binds dsDNA region spans residues 353-473; sequence KLNAQPVTLE…VELLKRQLQE (121 aa).

It belongs to the DnaA family. Oligomerizes as a right-handed, spiral filament on DNA at oriC.

It is found in the cytoplasm. Functionally, plays an essential role in the initiation and regulation of chromosomal replication. ATP-DnaA binds to the origin of replication (oriC) to initiate formation of the DNA replication initiation complex once per cell cycle. Binds the DnaA box (a 9 base pair repeat at the origin) and separates the double-stranded (ds)DNA. Forms a right-handed helical filament on oriC DNA; dsDNA binds to the exterior of the filament while single-stranded (ss)DNA is stabiized in the filament's interior. The ATP-DnaA-oriC complex binds and stabilizes one strand of the AT-rich DNA unwinding element (DUE), permitting loading of DNA polymerase. After initiation quickly degrades to an ADP-DnaA complex that is not apt for DNA replication. Binds acidic phospholipids. The polypeptide is Chromosomal replication initiator protein DnaA (Rhodopseudomonas palustris (strain BisB18)).